A 420-amino-acid polypeptide reads, in one-letter code: Sulfate adenylyltransferase (420 aa).

The protein belongs to the sulfate adenylyltransferase family.

It catalyses the reaction sulfate + ATP + H(+) = adenosine 5'-phosphosulfate + diphosphate. Its pathway is sulfur metabolism; hydrogen sulfide biosynthesis; sulfite from sulfate: step 1/3. This chain is Sulfate adenylyltransferase, found in Desulforudis audaxviator (strain MP104C).